Consider the following 279-residue polypeptide: Energy-coupling factor transporter ATP-binding protein EcfA2 (279 aa).

One can recognise an ABC transporter domain in the interval 3 to 245 (ITLKNVSYTY…LDFMESIQLG (243 aa)). ATP is bound at residue 40 to 47 (GHTGSGKS).

It belongs to the ABC transporter superfamily. Energy-coupling factor EcfA family. Forms a stable energy-coupling factor (ECF) transporter complex composed of 2 membrane-embedded substrate-binding proteins (S component), 2 ATP-binding proteins (A component) and 2 transmembrane proteins (T component).

The protein resides in the cell membrane. ATP-binding (A) component of a common energy-coupling factor (ECF) ABC-transporter complex. Unlike classic ABC transporters this ECF transporter provides the energy necessary to transport a number of different substrates. The chain is Energy-coupling factor transporter ATP-binding protein EcfA2 from Streptococcus sanguinis (strain SK36).